The following is a 126-amino-acid chain: Fluoride-specific ion channel FluC (126 aa).

A run of 4 helical transmembrane segments spans residues 4 to 24, 38 to 58, 71 to 91, and 104 to 124; these read FAIL…RYLV, YGTL…IAAF, IIGL…MDNV, and LNVV…FQLL. Na(+) is bound by residues G78 and T81.

It belongs to the fluoride channel Fluc/FEX (TC 1.A.43) family.

The protein resides in the cell inner membrane. It carries out the reaction fluoride(in) = fluoride(out). Its activity is regulated as follows. Na(+) is not transported, but it plays an essential structural role and its presence is essential for fluoride channel function. Its function is as follows. Fluoride-specific ion channel. Important for reducing fluoride concentration in the cell, thus reducing its toxicity. The protein is Fluoride-specific ion channel FluC of Vibrio vulnificus (strain CMCP6).